The primary structure comprises 425 residues: Dihydroorotase (425 aa).

His61 and His63 together coordinate Zn(2+). Substrate-binding positions include 63–65 (HLR) and Asn95. Zn(2+)-binding residues include Lys146, His175, His224, and Asp293. Lys146 carries the N6-carboxylysine modification. The active site involves Asp293. Substrate contacts are provided by residues His297 and 311–312 (PG).

It belongs to the metallo-dependent hydrolases superfamily. DHOase family. Class I DHOase subfamily. Zn(2+) is required as a cofactor.

It catalyses the reaction (S)-dihydroorotate + H2O = N-carbamoyl-L-aspartate + H(+). The protein operates within pyrimidine metabolism; UMP biosynthesis via de novo pathway; (S)-dihydroorotate from bicarbonate: step 3/3. Functionally, catalyzes the reversible cyclization of carbamoyl aspartate to dihydroorotate. This Aeropyrum pernix (strain ATCC 700893 / DSM 11879 / JCM 9820 / NBRC 100138 / K1) protein is Dihydroorotase.